The chain runs to 146 residues: NADH-quinone oxidoreductase subunit A (146 aa).

Helical transmembrane passes span 8–28 (FGSVFVFLLLGVIFVVGGYLT), 63–83 (FYVVALIFIIFDVEVVFLYPW), and 93–113 (FALIEVLVFAGILILGLAYAW).

This sequence belongs to the complex I subunit 3 family. As to quaternary structure, NDH-1 is composed of 14 different subunits. Subunits NuoA, H, J, K, L, M, N constitute the membrane sector of the complex.

Its subcellular location is the cell inner membrane. It catalyses the reaction a quinone + NADH + 5 H(+)(in) = a quinol + NAD(+) + 4 H(+)(out). Functionally, NDH-1 shuttles electrons from NADH, via FMN and iron-sulfur (Fe-S) centers, to quinones in the respiratory chain. The immediate electron acceptor for the enzyme in this species is believed to be a menaquinone. Couples the redox reaction to proton translocation (for every two electrons transferred, four hydrogen ions are translocated across the cytoplasmic membrane), and thus conserves the redox energy in a proton gradient. This is NADH-quinone oxidoreductase subunit A from Chlorobium chlorochromatii (strain CaD3).